Here is a 611-residue protein sequence, read N- to C-terminus: Menin (611 aa).

Residues 214-390 (GVAERSWLYL…SLLETGEERT (177 aa)) are interaction with FANCD2. Residues 460-553 (REAEAAEAEE…SPPPEGPVLT (94 aa)) are disordered. The segment covering 484 to 500 (RRESKPEEPPPPKKPAL) has biased composition (basic and acidic residues). S487 and S544 each carry phosphoserine. Phosphothreonine is present on T595.

As to quaternary structure, component of the MLL-HCF complex, at least composed of KMT2A/MLL1, MEN1, ASH2L, RBBP5, DPY30, WDR5, HCFC1 and HCFC2. Component of the menin-associated histone methyltransferase complex, at least composed of KMT2B/MLL4, MEN1, ASH2L, RBBP5, DPY30 and WDR5. Interacts with POLR2B. Interacts with POLR2A phosphorylated at 'Ser-5', but not with the unphosphorylated, nor 'Ser-2' phosphorylated POLR2A forms. Interacts with FANCD2 and DBF4. Interacts with SMAD3, but not with SMAD2, nor SMAD4. Directly interacts with NFKB1, NFKB2 and RELA. Interacts with JUND (via MBM motif); inhibits the interaction of JUND with MAPK10 and the phosphorylation of JUND by MAP kinases MAPK8 and MAPK10. Interacts with KMT2A (via MBM motif). The KMT2A-MEN1 complex interacts with PSIP1 with a greater affinity as MEN1 enhances interaction of KMT2A with PSIP1. Widely expressed, with high levels in hippocampus, cerebral cortex, testis and thymus (at protein level). Also expressed at high levels in pancreatic islets, ovary and bone marrow. In the brain, highest expression in hippocampus pyramidal nerve cells (at protein level). In the testis, may be expressed in spermatogonia (at protein level). Low expression, if any, in skeletal muscle.

Its subcellular location is the nucleus. Essential component of a MLL/SET1 histone methyltransferase (HMT) complex, a complex that specifically methylates 'Lys-4' of histone H3 (H3K4). Functions as a transcriptional regulator. Binds to the TERT promoter and represses telomerase expression. Plays a role in TGFB1-mediated inhibition of cell-proliferation, possibly regulating SMAD3 transcriptional activity. Represses JUND-mediated transcriptional activation on AP1 sites, as well as that mediated by NFKB subunit RELA. Positively regulates HOXC8 and HOXC6 gene expression. May be involved in normal hematopoiesis through the activation of HOXA9 expression. May be involved in DNA repair. This is Menin (Men1) from Mus musculus (Mouse).